Reading from the N-terminus, the 136-residue chain is Protein LpdD (136 aa).

It belongs to the CinA family.

Probably involved in tannin degradation, however the precise biochemical function in metabolism of gallate is unknown. In Lactiplantibacillus plantarum (strain ATCC BAA-793 / NCIMB 8826 / WCFS1) (Lactobacillus plantarum), this protein is Protein LpdD.